We begin with the raw amino-acid sequence, 693 residues long: Glycine--tRNA ligase beta subunit (693 aa).

Belongs to the class-II aminoacyl-tRNA synthetase family. Tetramer of two alpha and two beta subunits.

Its subcellular location is the cytoplasm. The enzyme catalyses tRNA(Gly) + glycine + ATP = glycyl-tRNA(Gly) + AMP + diphosphate. The protein is Glycine--tRNA ligase beta subunit of Natranaerobius thermophilus (strain ATCC BAA-1301 / DSM 18059 / JW/NM-WN-LF).